We begin with the raw amino-acid sequence, 213 residues long: Probable nicotinate-nucleotide adenylyltransferase (213 aa).

Positions Arg194 to Arg213 are disordered. Positions Glu200–Arg213 are enriched in basic and acidic residues.

This sequence belongs to the NadD family.

It carries out the reaction nicotinate beta-D-ribonucleotide + ATP + H(+) = deamido-NAD(+) + diphosphate. It functions in the pathway cofactor biosynthesis; NAD(+) biosynthesis; deamido-NAD(+) from nicotinate D-ribonucleotide: step 1/1. In terms of biological role, catalyzes the reversible adenylation of nicotinate mononucleotide (NaMN) to nicotinic acid adenine dinucleotide (NaAD). The polypeptide is Probable nicotinate-nucleotide adenylyltransferase (Mycolicibacterium smegmatis (strain ATCC 700084 / mc(2)155) (Mycobacterium smegmatis)).